A 118-amino-acid polypeptide reads, in one-letter code: Cell division protein FtsB (118 aa).

Topologically, residues 1 to 3 (MRL) are cytoplasmic. The chain crosses the membrane as a helical span at residues 4-21 (LFLVLLVLLGLIQYPLWL). Topologically, residues 22 to 118 (GKGGWFKVWD…PRPPATPPRR (97 aa)) are periplasmic. A coiled-coil region spans residues 28–62 (KVWDLQRQVAEQRETNDGLRARNTALEAEVRDLAT). The interval 88–118 (LPPGTPLPSDNSTPQASALSKPRPPATPPRR) is disordered. Polar residues predominate over residues 95-105 (PSDNSTPQASA). Residues 109 to 118 (PRPPATPPRR) show a composition bias toward pro residues.

It belongs to the FtsB family. As to quaternary structure, part of a complex composed of FtsB, FtsL and FtsQ.

Its subcellular location is the cell inner membrane. Essential cell division protein. May link together the upstream cell division proteins, which are predominantly cytoplasmic, with the downstream cell division proteins, which are predominantly periplasmic. The sequence is that of Cell division protein FtsB from Bordetella bronchiseptica (strain ATCC BAA-588 / NCTC 13252 / RB50) (Alcaligenes bronchisepticus).